The sequence spans 152 residues: Ubiquitin-conjugating enzyme E2 N (152 aa).

The 147-residue stretch at 3–149 folds into the UBC core domain; that stretch reads GLPRRIIKET…ARAWTRLYAM (147 aa). The residue at position 82 (K82) is an N6-acetyllysine. Residue C87 is the Glycyl thioester intermediate of the active site. K92 is covalently cross-linked (Glycyl lysine isopeptide (Lys-Gly) (interchain with G-Cter in ISG15)).

This sequence belongs to the ubiquitin-conjugating enzyme family. In terms of assembly, heterodimer with UBE2V2. Interacts (UBE2V2-UBE2N heterodimer) with the E3 ligase STUB1 (via the U-box domain); the complex has a specific 'Lys-63'-linked polyubiquitination activity. Interacts with RNF8 and RNF168. Interacts with RNF11. Interacts with the E3 ligases, HLTF and SHPRH; the interactions promote the 'Lys-63'-linked polyubiquitination of PCNA upon genotoxic stress and lead to DNA repair. Interacts with ARIH2 (via RING-type 2). Interacts with OTUB1; leading to inhibit E2-conjugating activity. Interacts with RIGI and RNF135; involved in RIGI ubiquitination and activation. In terms of processing, conjugation to ISG15 impairs formation of the thioester bond with ubiquitin but not interaction with UBE2V2.

It carries out the reaction S-ubiquitinyl-[E1 ubiquitin-activating enzyme]-L-cysteine + [E2 ubiquitin-conjugating enzyme]-L-cysteine = [E1 ubiquitin-activating enzyme]-L-cysteine + S-ubiquitinyl-[E2 ubiquitin-conjugating enzyme]-L-cysteine.. The protein operates within protein modification; protein ubiquitination. Its activity is regulated as follows. Activity is inhibited by binding to OTUB1, which prevents 'Lys-63'-linked polyubiquitination. Its function is as follows. The UBE2V1-UBE2N and UBE2V2-UBE2N heterodimers catalyze the synthesis of non-canonical 'Lys-63'-linked polyubiquitin chains. This type of polyubiquitination does not lead to protein degradation by the proteasome. Mediates transcriptional activation of target genes. Plays a role in the control of progress through the cell cycle and differentiation. Plays a role in the error-free DNA repair pathway and contributes to the survival of cells after DNA damage. Acts together with the E3 ligases, HLTF and SHPRH, in the 'Lys-63'-linked poly-ubiquitination of PCNA upon genotoxic stress, which is required for DNA repair. Appears to act together with E3 ligase RNF5 in the 'Lys-63'-linked polyubiquitination of JKAMP thereby regulating JKAMP function by decreasing its association with components of the proteasome and ERAD. Promotes TRIM5 capsid-specific restriction activity and the UBE2V1-UBE2N heterodimer acts in concert with TRIM5 to generate 'Lys-63'-linked polyubiquitin chains which activate the MAP3K7/TAK1 complex which in turn results in the induction and expression of NF-kappa-B and MAPK-responsive inflammatory genes. Together with RNF135 and UB2V1, catalyzes the viral RNA-dependent 'Lys-63'-linked polyubiquitination of RIGI to activate the downstream signaling pathway that leads to interferon beta production. UBE2V1-UBE2N together with TRAF3IP2 E3 ubiquitin ligase mediate 'Lys-63'-linked polyubiquitination of TRAF6, a component of IL17A-mediated signaling pathway. The chain is Ubiquitin-conjugating enzyme E2 N (UBE2N) from Macaca fascicularis (Crab-eating macaque).